A 337-amino-acid chain; its full sequence is Ferrochelatase (337 aa).

Fe cation contacts are provided by His189 and Glu293.

It belongs to the ferrochelatase family.

Its subcellular location is the cytoplasm. It catalyses the reaction heme b + 2 H(+) = protoporphyrin IX + Fe(2+). The protein operates within porphyrin-containing compound metabolism; protoheme biosynthesis; protoheme from protoporphyrin-IX: step 1/1. Its function is as follows. Catalyzes the ferrous insertion into protoporphyrin IX. The polypeptide is Ferrochelatase (Pseudomonas putida (strain W619)).